Reading from the N-terminus, the 538-residue chain is CTP synthase (538 aa).

Residues 1-267 are amidoligase domain; it reads MDRAKFIFVT…LTPIARRFNL (267 aa). Ser15 contacts CTP. Residue Ser15 coordinates UTP. Residues 16-21 and Asp73 contribute to the ATP site; that span reads SLGKGI. Residues Asp73 and Glu141 each coordinate Mg(2+). CTP contacts are provided by residues 148–150, 188–193, and Lys224; these read DME and KTKPTQ. UTP contacts are provided by residues 188-193 and Lys224; that span reads KTKPTQ. The Glutamine amidotransferase type-1 domain maps to 292-538; it reads KIGFVGKYLS…DFIKSALSKS (247 aa). Residue Gly351 coordinates L-glutamine. Cys378 serves as the catalytic Nucleophile; for glutamine hydrolysis. L-glutamine contacts are provided by residues 379 to 382, Glu402, and Arg469; that span reads LGMQ. Active-site residues include His513 and Glu515.

Belongs to the CTP synthase family. In terms of assembly, homotetramer.

It carries out the reaction UTP + L-glutamine + ATP + H2O = CTP + L-glutamate + ADP + phosphate + 2 H(+). It catalyses the reaction L-glutamine + H2O = L-glutamate + NH4(+). The enzyme catalyses UTP + NH4(+) + ATP = CTP + ADP + phosphate + 2 H(+). It participates in pyrimidine metabolism; CTP biosynthesis via de novo pathway; CTP from UDP: step 2/2. Allosterically activated by GTP, when glutamine is the substrate; GTP has no effect on the reaction when ammonia is the substrate. The allosteric effector GTP functions by stabilizing the protein conformation that binds the tetrahedral intermediate(s) formed during glutamine hydrolysis. Inhibited by the product CTP, via allosteric rather than competitive inhibition. Its function is as follows. Catalyzes the ATP-dependent amination of UTP to CTP with either L-glutamine or ammonia as the source of nitrogen. Regulates intracellular CTP levels through interactions with the four ribonucleotide triphosphates. The chain is CTP synthase from Helicobacter pylori (strain ATCC 700392 / 26695) (Campylobacter pylori).